Reading from the N-terminus, the 124-residue chain is Non-structural protein 2 (124 aa).

Positions 121-124 (DLNP) match the DLNP; interaction with MAP1B motif.

The protein belongs to the pneumovirus non-structural protein 2 family. As to quaternary structure, monomer (instable). Homomultimer. Heteromultimer with NS1. Interacts with host RIGI (via N-terminus); this interaction prevents host signaling pathway involved in interferon production. Interacts with host MAP1B/microtubule-associated protein 1B.

The protein localises to the host mitochondrion. Its function is as follows. Plays a major role in antagonizing the type I IFN-mediated antiviral response. Acts cooperatively with NS1 to repress activation and nuclear translocation of host IFN-regulatory factor IRF3. Interacts with the host cytoplasmic sensor of viral nucleic acids RIGI and prevents the interaction with its downstream partner MAVS. Together with NS2, participates in the proteasomal degradation of host STAT2, IRF3, IRF7, TBK1 and RIGI through a NS-degradasome involving CUL2 and Elongin-C. The degradasome requires an intact mitochondrial MAVS. Induces host SOCS1 expression. Induces activation of NF-kappa-B. Suppresses premature apoptosis by an NF-kappa-B-dependent, interferon-independent mechanism promoting continued viral replication. The polypeptide is Non-structural protein 2 (1B) (Human respiratory syncytial virus A (strain A2)).